We begin with the raw amino-acid sequence, 364 residues long: UDP-N-acetylglucosamine--N-acetylmuramyl-(pentapeptide) pyrophosphoryl-undecaprenol N-acetylglucosamine transferase 1 (364 aa).

UDP-N-acetyl-alpha-D-glucosamine contacts are provided by residues 10-12 (TGG), asparagine 124, serine 195, isoleucine 250, and glutamine 295.

This sequence belongs to the glycosyltransferase 28 family. MurG subfamily.

The protein resides in the cell membrane. The enzyme catalyses di-trans,octa-cis-undecaprenyl diphospho-N-acetyl-alpha-D-muramoyl-L-alanyl-D-glutamyl-meso-2,6-diaminopimeloyl-D-alanyl-D-alanine + UDP-N-acetyl-alpha-D-glucosamine = di-trans,octa-cis-undecaprenyl diphospho-[N-acetyl-alpha-D-glucosaminyl-(1-&gt;4)]-N-acetyl-alpha-D-muramoyl-L-alanyl-D-glutamyl-meso-2,6-diaminopimeloyl-D-alanyl-D-alanine + UDP + H(+). Its pathway is cell wall biogenesis; peptidoglycan biosynthesis. In terms of biological role, cell wall formation. Catalyzes the transfer of a GlcNAc subunit on undecaprenyl-pyrophosphoryl-MurNAc-pentapeptide (lipid intermediate I) to form undecaprenyl-pyrophosphoryl-MurNAc-(pentapeptide)GlcNAc (lipid intermediate II). The sequence is that of UDP-N-acetylglucosamine--N-acetylmuramyl-(pentapeptide) pyrophosphoryl-undecaprenol N-acetylglucosamine transferase 1 from Bacillus anthracis.